Here is a 276-residue protein sequence, read N- to C-terminus: Sulfur carrier protein FdhD (276 aa).

Cys122 functions as the Cysteine persulfide intermediate in the catalytic mechanism. 259 to 264 (FCRRGR) is a binding site for Mo-bis(molybdopterin guanine dinucleotide).

Belongs to the FdhD family.

Its subcellular location is the cytoplasm. Required for formate dehydrogenase (FDH) activity. Acts as a sulfur carrier protein that transfers sulfur from IscS to the molybdenum cofactor prior to its insertion into FDH. This is Sulfur carrier protein FdhD from Proteus mirabilis (strain HI4320).